The primary structure comprises 503 residues: Cytochrome P450 3A25 (503 aa).

Position 442 (cysteine 442) interacts with heme.

The protein belongs to the cytochrome P450 family. The cofactor is heme.

The protein resides in the endoplasmic reticulum membrane. The protein localises to the microsome membrane. It carries out the reaction an organic molecule + reduced [NADPH--hemoprotein reductase] + O2 = an alcohol + oxidized [NADPH--hemoprotein reductase] + H2O + H(+). Cytochromes P450 are a group of heme-thiolate monooxygenases. In liver microsomes, this enzyme is involved in an NADPH-dependent electron transport pathway. It oxidizes a variety of structurally unrelated compounds, including steroids, fatty acids, and xenobiotics. The protein is Cytochrome P450 3A25 (Cyp3a25) of Mus musculus (Mouse).